The sequence spans 376 residues: N-acetyldiaminopimelate deacetylase (376 aa).

D69 is a catalytic residue. The active-site Proton acceptor is the E128.

The protein belongs to the peptidase M20A family. N-acetyldiaminopimelate deacetylase subfamily.

The enzyme catalyses N-acetyl-(2S,6S)-2,6-diaminopimelate + H2O = (2S,6S)-2,6-diaminopimelate + acetate. The protein operates within amino-acid biosynthesis; L-lysine biosynthesis via DAP pathway; LL-2,6-diaminopimelate from (S)-tetrahydrodipicolinate (acetylase route): step 3/3. In terms of biological role, catalyzes the conversion of N-acetyl-diaminopimelate to diaminopimelate and acetate. This chain is N-acetyldiaminopimelate deacetylase, found in Streptococcus pneumoniae serotype 19F (strain G54).